The sequence spans 811 residues: Potassium transporter 7 (811 aa).

Topologically, residues 1 to 52 are cytoplasmic; the sequence is MPSYQYLLSLLFYILDCTDRFSVIVTIHNHRVGVLMIVLLQDQWKSYCRTIS. A helical membrane pass occupies residues 53–73; the sequence is LLAFQSFGVVYGDLSTSPLYV. The Extracellular segment spans residues 74-93; it reads YKSAFSGRLNNYRDETTIFG. The helical transmembrane segment at 94–114 threads the bilayer; that stretch reads LFSLIFWTLTLLPLLKYVIIV. Residues 115-181 lie on the Cytoplasmic side of the membrane; the sequence is LNADDNGEGG…EKHRKLRTCL (67 aa). A helical membrane pass occupies residues 182–202; the sequence is LLFVLFGACMVIGDGVFTPAI. Over 203–217 the chain is Extracellular; that stretch reads SVLSAISGLKDPGPG. A helical transmembrane segment spans residues 218–238; it reads GIPDGWVVFIACIVLVGLFAL. The Cytoplasmic portion of the chain corresponds to 239 to 245; sequence QHRGTHR. The helical transmembrane segment at 246 to 266 threads the bilayer; that stretch reads VAFMFAPIVVVWLLSIGVIGL. The Extracellular segment spans residues 267–296; sequence YNIIHWNHRIFLALSPHYVIKFFKMTGKDG. Residues 297-317 form a helical membrane-spanning segment; that stretch reads WLSLGGVLLAITGTEAMFADL. At 318-326 the chain is on the cytoplasmic side; sequence GHFTAASIR. A helical transmembrane segment spans residues 327-347; sequence LAFVGAIYPCLVLQYMGQAAF. The Extracellular segment spans residues 348–366; sequence LSRNMSAVEDSFYQSVPRS. Residue N351 is glycosylated (N-linked (GlcNAc...) asparagine). Residues 367-387 traverse the membrane as a helical segment; that stretch reads LFWPVFVIATLAAVVGSQSII. The Cytoplasmic segment spans residues 388 to 418; the sequence is SATFSIVKQCLSLGCFPRVKVVHTSRWIHGQ. A helical transmembrane segment spans residues 419 to 439; it reads IYIPEINWILMVLCLAVTLGF. Residues 440 to 450 lie on the Extracellular side of the membrane; that stretch reads RDTTVIGNAYG. The helical transmembrane segment at 451–471 threads the bilayer; sequence LACIVVMFVTTWLMALVIIFV. Residues 472-475 are Cytoplasmic-facing; sequence WQKN. Residues 476-496 form a helical membrane-spanning segment; it reads ILLALLFVVAFGSIEVVYLSA. The Extracellular portion of the chain corresponds to 497–503; it reads AVTKVPQ. Residues 504–524 form a helical membrane-spanning segment; the sequence is GGWAPIVFAFVFMLVMYVWHY. At 525–811 the chain is on the cytoplasmic side; the sequence is GSRRKYLFDL…LVEVGMIYYV (287 aa). The segment at 680 to 702 is disordered; that stretch reads TGLVMRDSNNEASGTSLTRSSRS.

It belongs to the HAK/KUP transporter (TC 2.A.72.3) family. Expressed in roots and shoots.

The protein localises to the membrane. High-affinity potassium transporter. The polypeptide is Potassium transporter 7 (HAK7) (Oryza sativa subsp. japonica (Rice)).